Here is a 431-residue protein sequence, read N- to C-terminus: Glutamate--tRNA ligase 1 (431 aa).

Residues 6–16 carry the 'HIGH' region motif; the sequence is PSPTGDMHIGN. The 'KMSKS' region motif lies at 235–239; sequence KMSKR. Lys-238 is a binding site for ATP.

It belongs to the class-I aminoacyl-tRNA synthetase family. Glutamate--tRNA ligase type 1 subfamily. In terms of assembly, monomer.

Its subcellular location is the cytoplasm. It carries out the reaction tRNA(Glu) + L-glutamate + ATP = L-glutamyl-tRNA(Glu) + AMP + diphosphate. In terms of biological role, catalyzes the attachment of glutamate to tRNA(Glu) in a two-step reaction: glutamate is first activated by ATP to form Glu-AMP and then transferred to the acceptor end of tRNA(Glu). This Campylobacter jejuni subsp. jejuni serotype O:2 (strain ATCC 700819 / NCTC 11168) protein is Glutamate--tRNA ligase 1.